The sequence spans 237 residues: Phosphoribosylaminoimidazole-succinocarboxamide synthase (237 aa).

The protein belongs to the SAICAR synthetase family.

It catalyses the reaction 5-amino-1-(5-phospho-D-ribosyl)imidazole-4-carboxylate + L-aspartate + ATP = (2S)-2-[5-amino-1-(5-phospho-beta-D-ribosyl)imidazole-4-carboxamido]succinate + ADP + phosphate + 2 H(+). It participates in purine metabolism; IMP biosynthesis via de novo pathway; 5-amino-1-(5-phospho-D-ribosyl)imidazole-4-carboxamide from 5-amino-1-(5-phospho-D-ribosyl)imidazole-4-carboxylate: step 1/2. This is Phosphoribosylaminoimidazole-succinocarboxamide synthase from Salmonella agona (strain SL483).